The sequence spans 338 residues: Mycothiol acetyltransferase (338 aa).

N-acetyltransferase domains follow at residues Pro-29–Pro-173 and Ile-181–Gln-338. Asp-55 contributes to the 1D-myo-inositol 2-(L-cysteinylamino)-2-deoxy-alpha-D-glucopyranoside binding site. Leu-105–Val-107 is a binding site for acetyl-CoA. 1D-myo-inositol 2-(L-cysteinylamino)-2-deoxy-alpha-D-glucopyranoside-binding residues include Glu-208, Lys-248, and Glu-261. Acetyl-CoA is bound by residues Val-265 to Ile-267 and Gln-272 to Lys-278. Tyr-299 provides a ligand contact to 1D-myo-inositol 2-(L-cysteinylamino)-2-deoxy-alpha-D-glucopyranoside.

The protein belongs to the acetyltransferase family. MshD subfamily. In terms of assembly, monomer.

It carries out the reaction 1D-myo-inositol 2-(L-cysteinylamino)-2-deoxy-alpha-D-glucopyranoside + acetyl-CoA = mycothiol + CoA + H(+). Functionally, catalyzes the transfer of acetyl from acetyl-CoA to desacetylmycothiol (Cys-GlcN-Ins) to form mycothiol. The sequence is that of Mycothiol acetyltransferase from Renibacterium salmoninarum (strain ATCC 33209 / DSM 20767 / JCM 11484 / NBRC 15589 / NCIMB 2235).